We begin with the raw amino-acid sequence, 494 residues long: Transcriptional regulator calD (494 aa).

It localises to the nucleus. Its function is as follows. Transcription co-regulator that might be involved in the regulation of the expression of the gene cluster that mediates the biosynthesis of calbistrins and related compounds such as decumbenones. Calbistrin A is a secondary metabolite with an interesting structure that was recently found to have bioactivity against leukemia cells. It consists of two polyketides linked by an ester bond: a bicyclic decalin containing polyketide and a linear 12 carbon dioic acid structure. The polypeptide is Transcriptional regulator calD (Penicillium decumbens).